A 28-amino-acid chain; its full sequence is uORF1 protein (28 aa).

The protein resides in the host cytoplasm. It localises to the host cytoskeleton. Its function is as follows. Plays a role in the reorganization of host microtubules and intermediate filaments to form a cytoskeletal cage that surrounds the viral factories, protecting the site of viral replication. May play a role in viral infection of human cortical neurons. This chain is uORF1 protein, found in Zika virus (isolate ZIKV/Human/French Polynesia/10087PF/2013) (ZIKV).